A 696-amino-acid polypeptide reads, in one-letter code: Zinc finger SWIM domain-containing protein 3 (696 aa).

Residues 531-572 (VDVQLLEDSHQVSKDGCSCSCSFQQWYHLPCRHILALLHTSQ) form an SWIM-type zinc finger.

The polypeptide is Zinc finger SWIM domain-containing protein 3 (ZSWIM3) (Homo sapiens (Human)).